A 149-amino-acid polypeptide reads, in one-letter code: Nucleoside diphosphate kinase 1 (149 aa).

ATP-binding residues include K9, F57, R85, T91, R102, and N112. H115 functions as the Pros-phosphohistidine intermediate in the catalytic mechanism.

The protein belongs to the NDK family. Homohexamer. Mg(2+) is required as a cofactor.

The catalysed reaction is a 2'-deoxyribonucleoside 5'-diphosphate + ATP = a 2'-deoxyribonucleoside 5'-triphosphate + ADP. It carries out the reaction a ribonucleoside 5'-diphosphate + ATP = a ribonucleoside 5'-triphosphate + ADP. In terms of biological role, major role in the synthesis of nucleoside triphosphates other than ATP. The ATP gamma phosphate is transferred to the NDP beta phosphate via a ping-pong mechanism, using a phosphorylated active-site intermediate. This NDK is microtubule-associated. In Oryza sativa subsp. japonica (Rice), this protein is Nucleoside diphosphate kinase 1 (NDKR).